Here is a 516-residue protein sequence, read N- to C-terminus: GMP synthase [glutamine-hydrolyzing] (516 aa).

In terms of domain architecture, Glutamine amidotransferase type-1 spans 8 to 198; that stretch reads KILILDFGSQ…ALNICKCDAL (191 aa). Cys84 acts as the Nucleophile in catalysis. Active-site residues include His172 and Glu174. Residues 199-391 enclose the GMPS ATP-PPase domain; that stretch reads WNIENIIEND…LGLPYNMLYR (193 aa). 226–232 provides a ligand contact to ATP; it reads SGGVDSS.

In terms of assembly, homodimer.

The catalysed reaction is XMP + L-glutamine + ATP + H2O = GMP + L-glutamate + AMP + diphosphate + 2 H(+). It functions in the pathway purine metabolism; GMP biosynthesis; GMP from XMP (L-Gln route): step 1/1. Catalyzes the synthesis of GMP from XMP. The chain is GMP synthase [glutamine-hydrolyzing] from Francisella philomiragia subsp. philomiragia (strain ATCC 25017 / CCUG 19701 / FSC 153 / O#319-036).